An 853-amino-acid chain; its full sequence is Deubiquitinase otu (853 aa).

Residues 1-20 (MDMQVQRPITSGSRQAPDPY) are disordered. The OTU domain occupies 29-150 (LYRKHTARDA…ENHFDSVYDV (122 aa)). Asp-37 is a catalytic residue. The active-site Nucleophile is Ser-40. Residue His-143 is part of the active site. One can recognise a Tudor domain in the interval 336–396 (NFKVGAKCKV…HPLPPDEYRP (61 aa)). The tract at residues 396–853 (PWSLPFRYHR…AAVYAATRHH (458 aa)) is LC domain. Residues 460–470 (QDDEQRDHNDP) are compositionally biased toward basic and acidic residues. Disordered regions lie at residues 460 to 531 (QDDE…YVPM), 681 to 704 (AVES…LEKS), 732 to 794 (GPAA…AAQG), and 817 to 853 (NMDP…TRHH). Positions 499-517 (SRVQPQNSSSSQNQEVSGS) are enriched in low complexity. The segment covering 747–758 (NGSQFSFYTTPS) has biased composition (polar residues). A compositionally biased stretch (pro residues) spans 769 to 778 (LLQPPPPPPI). Composition is skewed to low complexity over residues 783 to 794 (AGPPQLGGAAQG) and 820 to 838 (PSAQ…APLS).

As to quaternary structure, self aggregates, forming amyloid-like fibrillar helical structures; protein aggregation is mediated by the C-terminal LC domain, is enhanced by RNA binding and is essential for deubiquitinase activity. Interacts (via OTU domain) with bam (via C-terminus); the interaction enhances otu aggregation and deubiquitinase activity. Together with bam interacts with CycA/cyclin-A; the interaction stabilizes CycA by promoting its deubiquitination. Together with bam interacts with Traf6. Interacts with Hrb27C; the interaction is RNA-independent. Associates (via N-terminus) with mRNP complexes; the interaction is weak. In terms of tissue distribution, expressed at high levels in the ovary, at low levels in the brain and fat body, and at moderate levels in the gut.

Its subcellular location is the cytoplasm. It is found in the cell cortex. The protein resides in the perinuclear region. With respect to regulation, activated by protein aggregation, which is mediated by the LC domain and enhanced by RNA binding. Its function is as follows. Catalytic component of a deubiquitinase complex consisting of bam and otu. The complex deubiquitinates K63-linked polyubiquitinated proteins; this antagonizes the ubiquitination activity of Traf6 and regulates the IMD immune signaling pathway. Otu-bam deubiquitinase activity is regulated by Traf6 dependent immune signaling regulation of bam expression levels; this forms a feedback loop that regulates the IMD immune signaling pathway and balances gut immune activity during aging. The complex deubiquitinates and stabilizes CycA/cyclin-A to regulate CycA-dependent differentiation. Involved in grk mRNA localization to the dorsal anterior region of the oocyte required for dorsal-ventral axis determination; may function as a ribonuclear protein complex together with sqd and Hrb27C. May regulate actin cytoskeleton organization in differentiating cystocytes during fusome maturation; required for efficient nurse cell cytoplasmic dumping during oogenesis. Essential for female fertility; involved in germ cell proliferation and germ cell differentiation. In terms of biological role, involved in the early stages of germ cell proliferation and differentiation during oogenesis. Required for polytene chromosome dispersal in nurse cells during oogenesis. Involved in the later stages of germ cell proliferation and differentiation during oogenesis. This is Deubiquitinase otu from Drosophila melanogaster (Fruit fly).